A 926-amino-acid polypeptide reads, in one-letter code: Alanine--tRNA ligase (926 aa).

His-577, His-581, Cys-680, and His-684 together coordinate Zn(2+).

The protein belongs to the class-II aminoacyl-tRNA synthetase family. Zn(2+) serves as cofactor.

Its subcellular location is the cytoplasm. It carries out the reaction tRNA(Ala) + L-alanine + ATP = L-alanyl-tRNA(Ala) + AMP + diphosphate. Its function is as follows. Catalyzes the attachment of alanine to tRNA(Ala) in a two-step reaction: alanine is first activated by ATP to form Ala-AMP and then transferred to the acceptor end of tRNA(Ala). Also edits incorrectly charged Ser-tRNA(Ala) and Gly-tRNA(Ala) via its editing domain. This Methylacidiphilum infernorum (isolate V4) (Methylokorus infernorum (strain V4)) protein is Alanine--tRNA ligase.